Consider the following 236-residue polypeptide: 2-C-methyl-D-erythritol 4-phosphate cytidylyltransferase (236 aa).

This sequence belongs to the IspD/TarI cytidylyltransferase family. IspD subfamily. Homodimer.

It catalyses the reaction 2-C-methyl-D-erythritol 4-phosphate + CTP + H(+) = 4-CDP-2-C-methyl-D-erythritol + diphosphate. Its pathway is isoprenoid biosynthesis; isopentenyl diphosphate biosynthesis via DXP pathway; isopentenyl diphosphate from 1-deoxy-D-xylulose 5-phosphate: step 2/6. Its function is as follows. Catalyzes the formation of 4-diphosphocytidyl-2-C-methyl-D-erythritol from CTP and 2-C-methyl-D-erythritol 4-phosphate (MEP). In Escherichia coli O127:H6 (strain E2348/69 / EPEC), this protein is 2-C-methyl-D-erythritol 4-phosphate cytidylyltransferase.